The following is a 416-amino-acid chain: Serine protease hepsin (416 aa).

The Cytoplasmic segment spans residues 1–18 (MAKEGGRTAPCCSRPKVA). Residues 19-39 (ALTVGTLLFLTGIGAASWAIV) traverse the membrane as a helical; Signal-anchor for type II membrane protein segment. The Extracellular portion of the chain corresponds to 40–416 (TILLRSDQEP…SEATGMVTQP (377 aa)). The SRCR domain maps to 53 to 150 (VQLSPGDSRL…RGRFLTATCQ (98 aa)). 8 disulfides stabilise this stretch: C76-C139, C89-C149, C118-C137, C152-C276, C187-C203, C290-C358, C321-C337, and C348-C380. A glycan (N-linked (GlcNAc...) asparagine) is linked at N111. A Peptidase S1 domain is found at 162–404 (IVGGQDSSLG…FREWIFQAIK (243 aa)). Active-site charge relay system residues include H202 and D256. Catalysis depends on S352, which acts as the Charge relay system.

This sequence belongs to the peptidase S1 family. As to expression, widely expressed. Present in brain, heart, kidney, liver, stomach, muscle, lung, testis, skin and eye. Not expressed in ovary and thynus. In inner ear tissues, expressed in stria vascularis, modiolus, organ of Corti and spiral ganglion.

The protein resides in the cell membrane. The protein localises to the apical cell membrane. The catalysed reaction is Cleavage after basic amino-acid residues, with Arg strongly preferred to Lys.. Its function is as follows. Serine protease that cleaves extracellular substrates, and contributes to the proteolytic processing of growth factors, such as HGF and MST1/HGFL. Plays a role in cell growth and maintenance of cell morphology. Plays a role in the proteolytic processing of ACE2. Mediates the proteolytic cleavage of urinary UMOD that is required for UMOD polymerization. The protein is Serine protease hepsin (Hpn) of Rattus norvegicus (Rat).